The primary structure comprises 788 residues: Cadherin-10 (788 aa).

The signal sequence occupies residues 1–22; that stretch reads MTIHQFLLLFLFWVCLPHFCSP. Positions 23–54 are excised as a propeptide; it reads EIMFRRTPVPQQRILSSRVPRSDGKILHRQKR. 5 Cadherin domains span residues 55–160, 161–269, 270–384, 385–487, and 488–606; these read GWMW…EPTF, PEEI…PPRF, PQNT…PPVF, SRSS…DNAP, and QFAV…LLLP. Over 55-613 the chain is Extracellular; sequence GWMWNQFFLL…LLPAGLSTGA (559 aa). Residue Asn-256 is glycosylated (N-linked (GlcNAc...) asparagine). 3 N-linked (GlcNAc...) asparagine glycosylation sites follow: Asn-438, Asn-456, and Asn-534. A helical transmembrane segment spans residues 614 to 634; it reads LIAILLCIIILLVIVVLFAAL. Residues 635-788 are Cytoplasmic-facing; it reads KRQRKKEPLI…YGGGESDKDS (154 aa). 2 positions are modified to phosphoserine: Ser-784 and Ser-788.

Predominantly expressed in brain. Also found in adult and fetal kidney. Very low levels detected in prostate and fetal lung.

The protein resides in the cell membrane. Functionally, cadherins are calcium-dependent cell adhesion proteins. They preferentially interact with themselves in a homophilic manner in connecting cells; cadherins may thus contribute to the sorting of heterogeneous cell types. The sequence is that of Cadherin-10 (CDH10) from Homo sapiens (Human).